The chain runs to 512 residues: PTS system mannitol-specific EIICB component (512 aa).

Over 1–28 (MSQTEEKKGIGRRVQAFGSFLSSMIMPN) the chain is Cytoplasmic. In terms of domain architecture, PTS EIIC type-2 spans 17 to 349 (FGSFLSSMIM…MKFTKEPKQD (333 aa)). A helical membrane pass occupies residues 29-50 (IGAFIAWGFIAAIFIDNGWFPN). Residues 51 to 54 (KDLA) are Extracellular-facing. The chain crosses the membrane as a helical span at residues 55-75 (TLAGPMITYLIPLLIAFSGGR). The Cytoplasmic portion of the chain corresponds to 76-139 (LIYDLRGGII…QGFEMLFNNF (64 aa)). A helical membrane pass occupies residues 140–161 (SAGILGFIMTIAGFKILAPLMK). Residues 162-170 (FIMHILSVA) are Extracellular-facing. The chain crosses the membrane as a helical span at residues 171–191 (VEALVHAHLLPLVSILVEPAK). At 192-278 (IVFLNNAINH…VLMRPLLFIA (87 aa)) the chain is on the cytoplasmic side. Residues 279–298 (VILGGMTGVATYQATGFGFK) form a helical membrane-spanning segment. Topologically, residues 299 to 318 (SPASPGSFIVYCLNAPRGEF) are extracellular. The chain crosses the membrane as a helical span at residues 319 to 340 (LHMLLGVFLATLVSFVVAALIM). Topologically, residues 341–512 (KFTKEPKQDL…LNNLKKDDQA (172 aa)) are cytoplasmic. Positions 365–376 (SSVASKLVSSDK) are enriched in low complexity. Positions 365-401 (SSVASKLVSSDKNVNTEENASGNVSETSSLDDDPEAL) are disordered. The span at 380–392 (TEENASGNVSETS) shows a compositional bias: polar residues. Residues 419–512 (NHVIFACDAG…LNNLKKDDQA (94 aa)) enclose the PTS EIIB type-2 domain. The Phosphocysteine intermediate; for EIIB activity role is filled by Cys-425. Position 425 is a phosphocysteine; by EIIA (Cys-425).

As to quaternary structure, homodimer.

It localises to the cell membrane. The enzyme catalyses D-mannitol(out) + N(pros)-phospho-L-histidyl-[protein] = D-mannitol 1-phosphate(in) + L-histidyl-[protein]. Functionally, the phosphoenolpyruvate-dependent sugar phosphotransferase system (sugar PTS), a major carbohydrate active transport system, catalyzes the phosphorylation of incoming sugar substrates concomitantly with their translocation across the cell membrane. The enzyme II CmtAB PTS system is involved in D-mannitol transport. The chain is PTS system mannitol-specific EIICB component (mtlA) from Staphylococcus aureus (strain MRSA252).